The following is a 952-amino-acid chain: GATA zinc finger domain-containing protein 5 (952 aa).

2 disordered regions span residues 1–36 (MDYQ…DSPS) and 138–197 (PTPL…SPKQ). Over residues 10 to 24 (QISQEFPTDISTTKS) the composition is skewed to polar residues. Positions 148–157 (SPPPPPPPPA) are enriched in pro residues. A compositionally biased stretch (low complexity) spans 158–196 (ATTTTTITTTTTTSAGNSTTKNNNNNNNNNNNNNGKSPK). The segment at 241–266 (CYQCNTSNTPEWRKGPEGPATLCNAC) adopts a GATA-type zinc-finger fold. Disordered stretches follow at residues 380–418 (MTPS…HEQP), 433–478 (LLSS…GGGG), 634–699 (QNNS…NKNN), and 732–816 (QQQE…LSVN). Positions 393-412 (KTTKTKPKPKSKSKPGKITH) are enriched in basic residues. Positions 445 to 467 (SSSSSCGTSLNSSLGSSSGTITN) are enriched in low complexity. Positions 468–478 (SGGGSSGGGGG) are enriched in gly residues. Residues 634–653 (QNNSFSGPNDQNPYVPSVSL) show a composition bias toward polar residues. Composition is skewed to low complexity over residues 654–668 (NSNK…NNNK), 678–699 (NNKN…NKNN), and 732–745 (QQQE…EQQQ). The span at 746-762 (NLSINNSNQTNENEILG) shows a compositional bias: polar residues. Over residues 763–814 (TTTTTTTSTATIITSQVPMNLSPNSDDNQSSSNYSTLSDSGSSPTDSFSGLS) the composition is skewed to low complexity.

In Dictyostelium discoideum (Social amoeba), this protein is GATA zinc finger domain-containing protein 5 (gtaE).